We begin with the raw amino-acid sequence, 128 residues long: Cytochrome c' (128 aa).

Q13, Q17, E69, T70, C118, C121, and H122 together coordinate heme c.

As to quaternary structure, homodimer. Post-translationally, binds 1 heme c group covalently per subunit.

Functionally, cytochrome c' is the most widely occurring bacterial c-type cytochrome. Cytochromes c' are high-spin proteins and the heme has no sixth ligand. Their exact function is not known. The chain is Cytochrome c' from Magnetospirillum molischianum (Rhodospirillum molischianum).